The primary structure comprises 84 residues: MSSGGLLLLLGLLTLWAELTPISGHDRPTFCNLAPESGRCRGHLRRIYYNLESNKCEVFFYGGCGGNDNNFSTRDECRHTCVGK.

The N-terminal stretch at 1–24 is a signal peptide; sequence MSSGGLLLLLGLLTLWAELTPISG. Residues 31-81 enclose the BPTI/Kunitz inhibitor domain; that stretch reads CNLAPESGRCRGHLRRIYYNLESNKCEVFFYGGCGGNDNNFSTRDECRHTC. Cystine bridges form between cysteine 31–cysteine 81, cysteine 40–cysteine 64, and cysteine 56–cysteine 77. A glycan (N-linked (GlcNAc...) asparagine) is linked at asparagine 70.

It belongs to the venom Kunitz-type family. In terms of tissue distribution, expressed by the venom gland.

The protein localises to the secreted. In terms of biological role, serine protease inhibitor that inhibits plasmin and trypsin. The polypeptide is Kunitz-type serine protease inhibitor B3 (Daboia siamensis (Eastern Russel's viper)).